Consider the following 778-residue polypeptide: Protein translocase subunit SecA 2 (778 aa).

Residues Gln-94, 112–116 (GEGKT), and Asp-501 contribute to the ATP site.

Belongs to the SecA family. In terms of assembly, monomer and homodimer. Part of the essential Sec protein translocation apparatus which comprises SecA, SecYEG and auxiliary proteins SecDF. Other proteins may also be involved.

The protein localises to the cell membrane. It localises to the cytoplasm. The enzyme catalyses ATP + H2O + cellular proteinSide 1 = ADP + phosphate + cellular proteinSide 2.. In terms of biological role, part of the Sec protein translocase complex. Interacts with the SecYEG preprotein conducting channel. Has a central role in coupling the hydrolysis of ATP to the transfer of proteins into and across the cell membrane, serving as an ATP-driven molecular motor driving the stepwise translocation of polypeptide chains across the membrane. This chain is Protein translocase subunit SecA 2, found in Mycobacterium leprae (strain TN).